The chain runs to 422 residues: MDVLSPGQGNNTTSPPAPFETGGNTTGISDVTFSYQVITSLLLGTLIFCAVLGNACVVAAIALERSLQNVANYLIGSLAVTDLMVSVLVLPMAALYQVLNKWTLGQVTCDLFIALDVLCCTSSILHLCAIALDRYWAITDPIDYVNKRTPRRAAALISLTWLIGFLISIPPMLGWRTPEDRSDPDACTISKDHGYTIYSTFGAFYIPLLLMLVLYGRIFRAARFRIRKTVKKVEKTGADTHHGASPAPQPKKSVNGESGSRNWRLGVESKAGGGLCANGAVRQGDDGAALEVIEVHRVGNSKEHLPLPSEAGPTPCAPASFERKNERNAEAKRKMALARERKTVKTLGIIMGTFILCWLPFFIVALVLPFCESSCHMPTLLGAIINWLGYSNSLLNPVIYAYFNKDFQNAFKKIIKCKFCRQ.

The tract at residues 1-23 is disordered; sequence MDVLSPGQGNNTTSPPAPFETGG. At 1 to 38 the chain is on the extracellular side; it reads MDVLSPGQGNNTTSPPAPFETGGNTTGISDVTFSYQVI. 3 N-linked (GlcNAc...) asparagine glycosylation sites follow: asparagine 10, asparagine 11, and asparagine 24. The helical transmembrane segment at 39 to 59 threads the bilayer; that stretch reads TSLLLGTLIFCAVLGNACVVA. The Cytoplasmic segment spans residues 60 to 73; that stretch reads AIALERSLQNVANY. The chain crosses the membrane as a helical span at residues 74 to 98; sequence LIGSLAVTDLMVSVLVLPMAALYQV. The Extracellular segment spans residues 99–107; sequence LNKWTLGQV. The chain crosses the membrane as a helical span at residues 108–132; that stretch reads TCDLFIALDVLCCTSSILHLCAIAL. A disulfide bridge links cysteine 109 with cysteine 187. Residues aspartate 116 and cysteine 120 each coordinate serotonin. The DRY motif; important for ligand-induced conformation changes signature appears at 133-135; sequence DRY. Residues 133–152 lie on the Cytoplasmic side of the membrane; the sequence is DRYWAITDPIDYVNKRTPRR. The helical transmembrane segment at 153–174 threads the bilayer; that stretch reads AAALISLTWLIGFLISIPPMLG. Over 175-193 the chain is Extracellular; that stretch reads WRTPEDRSDPDACTISKDH. A helical transmembrane segment spans residues 194 to 216; that stretch reads GYTIYSTFGAFYIPLLLMLVLYG. Residues 217 to 346 lie on the Cytoplasmic side of the membrane; that stretch reads RIFRAARFRI…LARERKTVKT (130 aa). Positions 235-263 are disordered; the sequence is KTGADTHHGASPAPQPKKSVNGESGSRNW. Positions 314, 345, 346, and 352 each coordinate 1D-myo-inositol 4-phosphate. A helical transmembrane segment spans residues 347-370; that stretch reads LGIIMGTFILCWLPFFIVALVLPF. At 371 to 378 the chain is on the extracellular side; the sequence is CESSCHMP. A helical membrane pass occupies residues 379 to 403; the sequence is TLLGAIINWLGYSNSLLNPVIYAYF. Residues 396–400 carry the NPxxY motif; important for ligand-induced conformation changes and signaling motif; that stretch reads NPVIY. The 1D-myo-inositol 4-phosphate site is built by phenylalanine 403, asparagine 404, and lysine 405. Topologically, residues 404-422 are cytoplasmic; the sequence is NKDFQNAFKKIIKCKFCRQ.

This sequence belongs to the G-protein coupled receptor 1 family. 5-hydroxytryptamine receptor subfamily. HTR1A sub-subfamily. Heterodimer; heterodimerizes with GPER1. Interacts with YIF1B. Interacts with GPR39 and GALR1.

It localises to the cell membrane. It is found in the cell projection. The protein localises to the dendrite. Its activity is regulated as follows. G-protein coupled receptor activity is regulated by lipids: phosphatidylinositol 4-phosphate increases HTR1A-mediated activity. G-protein coupled receptor for 5-hydroxytryptamine (serotonin). Also functions as a receptor for various drugs and psychoactive substances. Ligand binding causes a conformation change that triggers signaling via guanine nucleotide-binding proteins (G proteins) and modulates the activity of downstream effectors, such as adenylate cyclase. HTR1A is coupled to G(i)/G(o) G alpha proteins and mediates inhibitory neurotransmission: signaling inhibits adenylate cyclase activity and activates a phosphatidylinositol-calcium second messenger system that regulates the release of Ca(2+) ions from intracellular stores. Beta-arrestin family members regulate signaling by mediating both receptor desensitization and resensitization processes. The protein is 5-hydroxytryptamine receptor 1A (HTR1A) of Pongo pygmaeus (Bornean orangutan).